A 583-amino-acid polypeptide reads, in one-letter code: DNA ligase (583 aa).

Glu249 is a binding site for ATP. Lys251 (N6-AMP-lysine intermediate) is an active-site residue. 6 residues coordinate ATP: Arg256, Arg271, Glu301, Phe341, Arg416, and Lys422.

The protein belongs to the ATP-dependent DNA ligase family. Mg(2+) serves as cofactor.

It carries out the reaction ATP + (deoxyribonucleotide)n-3'-hydroxyl + 5'-phospho-(deoxyribonucleotide)m = (deoxyribonucleotide)n+m + AMP + diphosphate.. DNA ligase that seals nicks in double-stranded DNA during DNA replication, DNA recombination and DNA repair. The sequence is that of DNA ligase from Pyrobaculum calidifontis (strain DSM 21063 / JCM 11548 / VA1).